The sequence spans 1221 residues: WEB family protein At4g27595, chloroplastic (1221 aa).

Residues 1 to 68 (MASRTKTGLM…VSDRRTARVP (68 aa)) are disordered. The transit peptide at 1–82 (MASRTKTGLM…ANYFLIIICM (82 aa)) directs the protein to the chloroplast. A compositionally biased stretch (polar residues) spans 32–58 (SDGNSPSPVQSTRLSIDRSPQTVNSKP). 3 coiled-coil regions span residues 95–149 (TGLL…AAQH), 202–543 (TEEL…FNSK), and 587–1084 (AAKE…GEEI). Positions 1073-1083 (EASSTHEKGEE) are enriched in basic and acidic residues. A disordered region spans residues 1073–1221 (EASSTHEKGE…LLKKKSSSQK (149 aa)). The span at 1084–1097 (ITNTNPFDNSTGEQ) shows a compositional bias: polar residues. 2 stretches are compositionally biased toward basic and acidic residues: residues 1106–1116 (AIDRHLKDDTT) and 1129–1160 (KGEK…TEHD). The span at 1175–1187 (NFDQLSNGLSLAE) shows a compositional bias: polar residues.

Belongs to the WEB family.

Its subcellular location is the plastid. The protein localises to the chloroplast. The protein is WEB family protein At4g27595, chloroplastic of Arabidopsis thaliana (Mouse-ear cress).